The chain runs to 243 residues: Cytochrome c oxidase subunit 2 (243 aa).

The Mitochondrial intermembrane portion of the chain corresponds to 1–34 (MNNIIHNDAPTPWGIYFQDGASPVYDGIVELHDQ). Residues 35-55 (VLFYLLIVLVGVSWILFSTIL) form a helical membrane-spanning segment. The Mitochondrial matrix portion of the chain corresponds to 56 to 74 (RFRGSGIVHKYHNHSTTIE). A helical membrane pass occupies residues 75-97 (FVWTVSPALLLIAIAFPSFKLLY). Topologically, residues 98-243 (LMDEVIDPSI…EKFLSWLDNQ (146 aa)) are mitochondrial intermembrane. Cu cation is bound by residues His178, Cys213, Glu215, Cys217, His221, and Met224. Position 215 (Glu215) interacts with Mg(2+).

This sequence belongs to the cytochrome c oxidase subunit 2 family. Component of the cytochrome c oxidase (complex IV, CIV), a multisubunit enzyme composed of a catalytic core of 3 subunits and several supernumerary subunits. The complex exists as a monomer or a dimer and forms supercomplexes (SCs) in the inner mitochondrial membrane with ubiquinol-cytochrome c oxidoreductase (cytochrome b-c1 complex, complex III, CIII). The cofactor is Cu cation.

It localises to the mitochondrion inner membrane. The enzyme catalyses 4 Fe(II)-[cytochrome c] + O2 + 8 H(+)(in) = 4 Fe(III)-[cytochrome c] + 2 H2O + 4 H(+)(out). In terms of biological role, component of the cytochrome c oxidase, the last enzyme in the mitochondrial electron transport chain which drives oxidative phosphorylation. The respiratory chain contains 3 multisubunit complexes succinate dehydrogenase (complex II, CII), ubiquinol-cytochrome c oxidoreductase (cytochrome b-c1 complex, complex III, CIII) and cytochrome c oxidase (complex IV, CIV), that cooperate to transfer electrons derived from NADH and succinate to molecular oxygen, creating an electrochemical gradient over the inner membrane that drives transmembrane transport and the ATP synthase. Cytochrome c oxidase is the component of the respiratory chain that catalyzes the reduction of oxygen to water. Electrons originating from reduced cytochrome c in the intermembrane space (IMS) are transferred via the dinuclear copper A center (CU(A)) of subunit 2 and heme A of subunit 1 to the active site in subunit 1, a binuclear center (BNC) formed by heme A3 and copper B (CU(B)). The BNC reduces molecular oxygen to 2 water molecules using 4 electrons from cytochrome c in the IMS and 4 protons from the mitochondrial matrix. This is Cytochrome c oxidase subunit 2 from Pneumocystis carinii.